A 1892-amino-acid polypeptide reads, in one-letter code: Sodium channel protein type 4 subunit alpha A (1892 aa).

Residues 1–125 (MATILPPPGT…RGAIKILIHS (125 aa)) lie on the Cytoplasmic side of the membrane. The disordered stretch occupies residues 34 to 54 (APKAGAHEEEEPPTPNPDLEA). Residues 107-433 (ILSPFSLVRR…VVAMAYDEQN (327 aa)) form an I repeat. The helical transmembrane segment at 126–144 (LFSTLIMITILSNCVFMTM) threads the bilayer. Residues 145 to 151 (SNPPAWS) lie on the Extracellular side of the membrane. Residues 152–172 (KTVEYVFTGIYTFEATVKVLS) form a helical membrane-spanning segment. The Cytoplasmic portion of the chain corresponds to 173 to 186 (RGFCVGPFTFLRDP). A helical membrane pass occupies residues 187–204 (WNWLDFMVISMAYITEFV). At 205–210 (DLGNVS) the chain is on the extracellular side. Asn208 is a glycosylation site (N-linked (GlcNAc...) asparagine). Residues 211–227 (ALRTFRVLRALKTITVI) form a helical membrane-spanning segment. The Cytoplasmic portion of the chain corresponds to 228 to 246 (PGLKTIVAALIQSVKKMVD). A helical transmembrane segment spans residues 247-266 (VMILTVFALAVFALVGLQLF). Residues 267-370 (MGNLRHKCIR…PNYGYTSFDS (104 aa)) lie on the Extracellular side of the membrane. Cys274 and Cys339 are oxidised to a cystine. 3 N-linked (GlcNAc...) asparagine glycosylation sites follow: Asn281, Asn294, and Asn341. Cysteines 348 and 354 form a disulfide. An intramembrane region (pore-forming) is located at residues 371–395 (FGWAFLALFRLMTQDNWESLFQLTL). Over 396 to 402 (RAAGQTY) the chain is Extracellular. Residues 403-423 (MLFFVVVIFLGSFYLINLILA) traverse the membrane as a helical segment. Topologically, residues 424 to 612 (VVAMAYDEQN…KWVHFVVMDP (189 aa)) are cytoplasmic. Residues 594 to 866 (CCEKWVVFKK…QIAIGRITRG (273 aa)) form an II repeat. Residues 613–631 (FVDLAITICIVLNTLFMAM) traverse the membrane as a helical segment. Topologically, residues 632 to 642 (EHYPMTEEFDY) are extracellular. The chain crosses the membrane as a helical span at residues 643–662 (MLSVGNLVFTGIFAAEMFFK). At 663–676 (LIAMDPYYYFQVGW) the chain is on the cytoplasmic side. Residues 677-696 (NIFDSIIVTLSLVELGLANV) form a helical membrane-spanning segment. Residues 697–698 (QG) are Extracellular-facing. A helical membrane pass occupies residues 699-716 (LSVLRSFRLLRVFKLAKS). Topologically, residues 717-732 (WPTLNMLIKIIGNSVG) are cytoplasmic. Residues 733-751 (ALGNLTLVLAIIVFIFAVV) traverse the membrane as a helical segment. At 752–780 (GMQLFGKSYKDCVCKISSDCELPRWHMND) the chain is on the extracellular side. Cys765 and Cys771 are oxidised to a cystine. An intramembrane region (pore-forming) is located at residues 781 to 801 (FFHSFLIVFRILCGEWIETMW). The Extracellular portion of the chain corresponds to 802-812 (DCMEVAGAGMC). The cysteines at positions 803 and 812 are disulfide-linked. Residues 813–831 (LVVFMMVMVIGNLVVLNLF) traverse the membrane as a helical segment. The Cytoplasmic segment spans residues 832–1071 (LALLLSSFSG…TCFTIVEHDW (240 aa)). Disordered regions lie at residues 884–905 (REPQKPAEEDPADEGEGKTEGM) and 945–982 (LGESDSENPSEDDDDQEDDVDSEVTCEENEHHSDGVED). The span at 948–971 (SDSENPSEDDDDQEDDVDSEVTCE) shows a compositional bias: acidic residues. The III repeat unit spans residues 1052–1366 (KGKKWWNLRK…KKYYEAMKKL (315 aa)). A helical transmembrane segment spans residues 1072–1089 (FETFIIFMILLSSGALAF). The Extracellular segment spans residues 1090-1102 (EDIYIERRRTVKI). Residues 1103-1121 (VLEFADKVFTFIFVIEMLL) form a helical membrane-spanning segment. The Cytoplasmic segment spans residues 1122-1135 (KWVAYGFKTYFTNA). Residues 1136-1154 (WCWLDFFIVDISLISLSAN) form a helical membrane-spanning segment. Residues 1155 to 1162 (LMGFSDLG) lie on the Extracellular side of the membrane. The chain crosses the membrane as a helical span at residues 1163-1181 (PIKSLRTLRALRPLRALSR). At 1182 to 1198 (FEGMRVVVNALIGAIPS) the chain is on the cytoplasmic side. The helical transmembrane segment at 1199–1218 (IFNVLLVCLIFWLIFSIMGV) threads the bilayer. Residues 1219–1270 (NLFAGKFYRCINTTTAELFPISVVNNKSDCVALQEATQEARWVNVKVNYDNV) are Extracellular-facing. An intrachain disulfide couples Cys1228 to Cys1248. N-linked (GlcNAc...) asparagine glycosylation is found at Asn1230 and Asn1244. Residues 1271–1292 (AKGYLSLLQIATFKGWMDIMYP) constitute an intramembrane region (pore-forming). The Extracellular segment spans residues 1293–1309 (AVDSREVEEQPSYEINL). Residues 1310 to 1331 (YMYIYFVIFIIFGSFFTLNLFI) traverse the membrane as a helical segment. Topologically, residues 1332–1394 (GVIIDNFNQQ…LVFDFISQQF (63 aa)) are cytoplasmic. The interval 1350–1352 (IFM) is important for rapid channel inactivation. An IV repeat occupies 1375-1673 (IPRPANLIQG…WEKFDTGGTQ (299 aa)). Residues 1395-1412 (FDIFIMVLICLNMVTMMV) form a helical membrane-spanning segment. The Extracellular segment spans residues 1413–1423 (ETDDQSPAKED). Residues 1424-1442 (FLFKVNVAFIVVFTGECTL) traverse the membrane as a helical segment. Over 1443 to 1454 (KLFALRHYFFTN) the chain is Cytoplasmic. Residues 1455-1472 (GWNIFDFIVVILSIAGTM) form a helical membrane-spanning segment. Residues 1473-1485 (LSDIIEKYFVSPT) are Extracellular-facing. A helical membrane pass occupies residues 1486–1502 (LFRVIRLARIGRILRLI). Over 1503–1521 (KGARGIRTLLFALMMSLPA) the chain is Cytoplasmic. The chain crosses the membrane as a helical span at residues 1522–1539 (LFNIGLLLFLIMFIFSIF). The Extracellular portion of the chain corresponds to 1540–1561 (GMSNFAYVKKEAGINDMFNFET). Residues 1562 to 1584 (FGSSIICLFQITTSAGWDTLLLP) constitute an intramembrane region (pore-forming). The Extracellular segment spans residues 1585–1614 (MLNKEPPDCDPAFENPGTDVKGNCGNPMMG). Cys1593 and Cys1608 are disulfide-bonded. Residues 1615–1637 (MVFFCSYIIISFLVVVNMYIAII) traverse the membrane as a helical segment. Over 1638–1892 (LENFNVAQEE…TQTILRETNV (255 aa)) the chain is Cytoplasmic. The IQ domain occupies 1767 to 1796 (EDMAAVVIQRAYRNHLHKRGIHHAAYIQRS). The interval 1836–1856 (RRRPDPQTRCSGARCSPEPPE) is disordered.

It belongs to the sodium channel (TC 1.A.1.10) family. Nav1.4/SCN4A subfamily. In terms of assembly, voltage-gated sodium (Nav) channels consist of an ion-conducting alpha subunit which is functional on its own associated with regulatory beta subunits.

The protein localises to the cell membrane. It catalyses the reaction Na(+)(in) = Na(+)(out). Functionally, pore-forming subunit of a voltage-gated sodium (Nav) channel that directly mediates the depolarizing phase of action potentials in excitable membranes. Navs, also called VGSCs (voltage-gated sodium channels) or VDSCs (voltage-dependent sodium channels), operate by switching between closed and open conformations depending on the voltage difference across the membrane. In the open conformation they allow Na(+) ions to selectively pass through the pore, along their electrochemical gradient. The influx of Na+ ions provokes membrane depolarization, initiating the propagation of electrical signals throughout cells and tissues. The polypeptide is Sodium channel protein type 4 subunit alpha A (scn4aa) (Takifugu rubripes (Japanese pufferfish)).